Consider the following 433-residue polypeptide: UPF0597 protein Spea_0809 (433 aa).

This sequence belongs to the UPF0597 family.

This is UPF0597 protein Spea_0809 from Shewanella pealeana (strain ATCC 700345 / ANG-SQ1).